Here is a 437-residue protein sequence, read N- to C-terminus: Branched-chain amino acid transport system 2 carrier protein (437 aa).

The next 12 helical transmembrane spans lie at 9-29 (LLAL…IIFP), 43-63 (AAFG…VALA), 80-100 (AGVA…ATPR), 117-137 (GGVP…FLVL), 149-169 (VITP…IFAP), 192-212 (GYLT…ATAI), 228-248 (MIAG…LFYL), 280-300 (LLLA…LITA), 308-328 (LLPV…LLVA), 335-355 (LISL…VLIA), 369-389 (VFVP…LGAA), and 404-424 (LADQ…LAVV).

Belongs to the branched chain amino acid transporter family.

It localises to the cell inner membrane. Functionally, component of the LIV-II transport system for branched-chain amino acids. BraB is specific for isoleucine, leucine and valine. The LIV-II transport system is coupled to sodium and lithium ions. The chain is Branched-chain amino acid transport system 2 carrier protein (braB) from Pseudomonas aeruginosa (strain ATCC 15692 / DSM 22644 / CIP 104116 / JCM 14847 / LMG 12228 / 1C / PRS 101 / PAO1).